The following is a 474-amino-acid chain: Serine/threonine-protein kinase ksp1 (474 aa).

One can recognise a Protein kinase domain in the interval 9 to 280 (YKVERPLNKG…EAVLAVTKWT (272 aa)). Residues 15–23 (LNKGSYGTV) and Lys-43 each bind ATP. Asp-137 serves as the catalytic Proton acceptor. The segment at 345–373 (VDENISTSSSPRSPASLAPVNNSERSYDS) is disordered. Positions 350–363 (STSSSPRSPASLAP) are enriched in low complexity. Phosphoserine is present on residues Ser-353, Ser-354, Ser-357, Ser-378, Ser-404, and Ser-413.

Belongs to the protein kinase superfamily. Ser/Thr protein kinase family.

The protein localises to the cytoplasm. Its subcellular location is the nucleus. The catalysed reaction is L-seryl-[protein] + ATP = O-phospho-L-seryl-[protein] + ADP + H(+). The enzyme catalyses L-threonyl-[protein] + ATP = O-phospho-L-threonyl-[protein] + ADP + H(+). The protein is Serine/threonine-protein kinase ksp1 (ksp1) of Schizosaccharomyces pombe (strain 972 / ATCC 24843) (Fission yeast).